A 415-amino-acid chain; its full sequence is Serine hydroxymethyltransferase (415 aa).

(6S)-5,6,7,8-tetrahydrofolate contacts are provided by residues Leu-121 and 125 to 127 (GHL). Lys-230 is modified (N6-(pyridoxal phosphate)lysine). Position 355-357 (355-357 (SPF)) interacts with (6S)-5,6,7,8-tetrahydrofolate.

It belongs to the SHMT family. In terms of assembly, homodimer. Pyridoxal 5'-phosphate is required as a cofactor.

The protein localises to the cytoplasm. It catalyses the reaction (6R)-5,10-methylene-5,6,7,8-tetrahydrofolate + glycine + H2O = (6S)-5,6,7,8-tetrahydrofolate + L-serine. The protein operates within one-carbon metabolism; tetrahydrofolate interconversion. Its pathway is amino-acid biosynthesis; glycine biosynthesis; glycine from L-serine: step 1/1. In terms of biological role, catalyzes the reversible interconversion of serine and glycine with tetrahydrofolate (THF) serving as the one-carbon carrier. This reaction serves as the major source of one-carbon groups required for the biosynthesis of purines, thymidylate, methionine, and other important biomolecules. Also exhibits THF-independent aldolase activity toward beta-hydroxyamino acids, producing glycine and aldehydes, via a retro-aldol mechanism. This Lactococcus lactis subsp. lactis (strain IL1403) (Streptococcus lactis) protein is Serine hydroxymethyltransferase.